Reading from the N-terminus, the 142-residue chain is MSLTKAERTMVVSIWGKISMQADAVGTEALQRLFSSYPQTKTYFPHFDLHEGSPQLRAHGSKVAAAVGDAVKSIDNVAGALAKLSELHAYILRVDPVNFKFLSHCLLVTLASRLPADFTADAHAAWDKFLSIVSSVLTEKYR.

At Ser-2 the chain carries N-acetylserine. Positions 2-142 constitute a Globin domain; sequence SLTKAERTMV…VSSVLTEKYR (141 aa). The residue at position 53 (Ser-53) is a Phosphoserine. His-59 contacts heme b. A Phosphoserine modification is found at Ser-73. His-88 provides a ligand contact to heme b.

The protein belongs to the globin family. Heterotetramer of two zeta chains and beta-type chains.

The zeta chain is an alpha-type chain of mammalian embryonic hemoglobin. The protein is Hemoglobin subunit zeta (HBZ1) of Equus caballus (Horse).